The primary structure comprises 158 residues: Phosphopantetheine adenylyltransferase (158 aa).

Thr-9 contacts substrate. ATP-binding positions include 9–10 and His-17; that span reads TF. The substrate site is built by Lys-41, Leu-73, and Arg-87. ATP contacts are provided by residues 88 to 90, Glu-98, and 123 to 129; these read GLR and YAYISSS.

This sequence belongs to the bacterial CoaD family. As to quaternary structure, homohexamer. Mg(2+) serves as cofactor.

The protein resides in the cytoplasm. The catalysed reaction is (R)-4'-phosphopantetheine + ATP + H(+) = 3'-dephospho-CoA + diphosphate. It functions in the pathway cofactor biosynthesis; coenzyme A biosynthesis; CoA from (R)-pantothenate: step 4/5. Its function is as follows. Reversibly transfers an adenylyl group from ATP to 4'-phosphopantetheine, yielding dephospho-CoA (dPCoA) and pyrophosphate. The sequence is that of Phosphopantetheine adenylyltransferase from Allochromatium vinosum (strain ATCC 17899 / DSM 180 / NBRC 103801 / NCIMB 10441 / D) (Chromatium vinosum).